Consider the following 499-residue polypeptide: Serine/threonine-protein phosphatase 5 (499 aa).

The interval 1-24 is disordered; that stretch reads MAMAEGERTECAETPRDEPPADGT. Ala-2 is subject to N-acetylalanine. TPR repeat units follow at residues 28–61, 62–95, and 96–129; these read AEEL…NPGN, AIYY…DKKY, and IKGY…KPND. A catalytic region spans residues 184–499; that stretch reads GKVTITFMKD…ANTLLQLGMM (316 aa). Asp-242, His-244, and Asp-271 together coordinate Mn(2+). A substrate-binding site is contributed by His-244. Substrate is bound by residues Arg-275 and 303-304; that span reads NH. Asn-303 is a Mn(2+) binding site. His-304 serves as the catalytic Proton donor/acceptor. His-352 lines the Mn(2+) pocket. Positions 400 and 427 each coordinate substrate. His-427 serves as a coordination point for Mn(2+). The tract at residues 495–499 is required for autoinhibition; the sequence is QLGMM.

This sequence belongs to the PPP phosphatase family. PP-5 (PP-T) subfamily. Probably forms a complex composed of chaperones HSP90 and HSP70, co-chaperones STIP1/HOP, CDC37, PPP5C, PTGES3/p23, TSC1 and client protein TSC2. Probably forms a complex composed of chaperones HSP90 and HSP70, co-chaperones CDC37, PPP5C, TSC1 and client protein TSC2, CDK4, AKT, RAF1 and NR3C1; this complex does not contain co-chaperones STIP1/HOP and PTGES3/p23. Part of a complex with HSP90/HSP90AA1 and steroid receptors. Interacts (via TPR repeats) with HSP90AA1 (via TPR repeat-binding motif) or HSPA1A/HSPA1B; the interaction is direct and activates the phosphatase activity. Dissociates from HSPA1A/HSPA1B and HSP90AA1 in response to arachidonic acid. Interacts with CPNE1 (via VWFA domain). Interacts with CDC16, CDC27. Interacts with KLHDC10 (via the 6 Kelch repeats); inhibits the phosphatase activity on MAP3K5. Interacts with ATM and ATR; both interactions are induced by DNA damage and enhance ATM and ATR kinase activity. Interacts with RAD17; reduced by DNA damage. Interacts with nuclear receptors such as NR3C1/GCR and PPARG (activated by agonist); regulates their transactivation activities. Interacts (via TPR repeats) with S100 proteins S100A1, S100A2, S100A6, S100B and S100P; the interactions are calcium-dependent, strongly activate PPP5C phosphatase activity and compete with HSP90AA1 and MAP3K5 interactions. Interacts with SMAD2 and SMAD3 but not with SMAD1; decreases SMAD3 phosphorylation and protein levels. Interacts (via TPR repeats) with CRY1 and CRY2; the interaction with CRY2 down-regulates the phosphatase activity on CSNK1E. Interacts (via TPR repeats) with the active form of RAC1, GNA12 or GNA13; these interactions activate the phosphatase activity and translocate PPP5C to the cell membrane. Interacts with FLCN. Mg(2+) is required as a cofactor. The cofactor is Mn(2+). Activated by at least two different proteolytic cleavages producing a 56 kDa and a 50 kDa form. As to expression, expressed in liver (at protein level) and brain, enriched in suprachiasmatic nuclei.

Its subcellular location is the nucleus. It is found in the cytoplasm. The protein resides in the cell membrane. It carries out the reaction O-phospho-L-seryl-[protein] + H2O = L-seryl-[protein] + phosphate. It catalyses the reaction O-phospho-L-threonyl-[protein] + H2O = L-threonyl-[protein] + phosphate. Its activity is regulated as follows. Autoinhibited. In the autoinhibited state, the TPR domain interacts with the catalytic region and prevents substrate access to the catalytic pocket. Allosterically activated by various polyunsaturated fatty acids, free long-chain fatty-acids and long-chain fatty acyl-CoA esters, arachidonic acid being the most effective activator. HSP90A and probably RAC1, GNA12 and GNA13 can also release the autoinhibition by the TPR repeat. Activation by RAC1, GNA12 and GNA13 is synergistic with the one produced by fatty acids binding. Inhibited by okadaic acid. Its function is as follows. Serine/threonine-protein phosphatase that dephosphorylates a myriad of proteins involved in different signaling pathways including the kinases CSNK1E, ASK1/MAP3K5, PRKDC and RAF1, the nuclear receptors NR3C1, PPARG, ESR1 and ESR2, SMAD proteins and TAU/MAPT. Implicated in wide ranging cellular processes, including apoptosis, differentiation, DNA damage response, cell survival, regulation of ion channels or circadian rhythms, in response to steroid and thyroid hormones, calcium, fatty acids, TGF-beta as well as oxidative and genotoxic stresses. Participates in the control of DNA damage response mechanisms such as checkpoint activation and DNA damage repair through, for instance, the regulation ATM/ATR-signaling and dephosphorylation of PRKDC and TP53BP1. Inhibits ASK1/MAP3K5-mediated apoptosis induced by oxidative stress. Plays a positive role in adipogenesis, mainly through the dephosphorylation and activation of PPARG transactivation function. Also dephosphorylates and inhibits the anti-adipogenic effect of NR3C1. Regulates the circadian rhythms, through the dephosphorylation and activation of CSNK1E. May modulate TGF-beta signaling pathway by the regulation of SMAD3 phosphorylation and protein expression levels. Dephosphorylates and may play a role in the regulation of TAU/MAPT. Through their dephosphorylation, may play a role in the regulation of ions channels such as KCNH2. Dephosphorylate FNIP1, disrupting interaction with HSP90AA1/Hsp90. The polypeptide is Serine/threonine-protein phosphatase 5 (Ppp5c) (Mus musculus (Mouse)).